Consider the following 446-residue polypeptide: Chromosomal replication initiator protein DnaA (446 aa).

Positions 1–81 (MENISDLWNS…AKLAIRFIIP (81 aa)) are domain I, interacts with DnaA modulators. A domain II region spans residues 81–109 (PQSQAEEDIDLPPVKRNPAQDDSAHLPQS). The domain III, AAA+ region stretch occupies residues 110 to 326 (MLNPKYTFDT…GALIRVVAYS (217 aa)). The ATP site is built by Gly-154, Gly-156, Lys-157, and Thr-158. The segment at 327–446 (SLINKDINAD…QVEEINGILK (120 aa)) is domain IV, binds dsDNA.

It belongs to the DnaA family. As to quaternary structure, oligomerizes as a right-handed, spiral filament on DNA at oriC.

It localises to the cytoplasm. Functionally, plays an essential role in the initiation and regulation of chromosomal replication. ATP-DnaA binds to the origin of replication (oriC) to initiate formation of the DNA replication initiation complex once per cell cycle. Binds the DnaA box (a 9 base pair repeat at the origin) and separates the double-stranded (ds)DNA. Forms a right-handed helical filament on oriC DNA; dsDNA binds to the exterior of the filament while single-stranded (ss)DNA is stabiized in the filament's interior. The ATP-DnaA-oriC complex binds and stabilizes one strand of the AT-rich DNA unwinding element (DUE), permitting loading of DNA polymerase. After initiation quickly degrades to an ADP-DnaA complex that is not apt for DNA replication. Binds acidic phospholipids. The sequence is that of Chromosomal replication initiator protein DnaA from Bacillus cereus (strain G9842).